We begin with the raw amino-acid sequence, 383 residues long: G-protein coupled receptor E1 (383 aa).

Transmembrane regions (helical) follow at residues 13 to 35 (SSLATTMTTNFTSLLTSVVTTIA), 78 to 98 (LYLLVFLFGLLGNILVVIIVI), 109 to 129 (MLLLNLAISDLLFLLTLPFWM), 160 to 180 (VFCIILLTVDRYLAVVYAVTA), 190 to 210 (IVTCVCTWFLAGLLSLPEFFF), 242 to 262 (VIMLSLILPLLIMAVCYYVII), 279 to 299 (LIFVIMVAYFVFWTPYNIVLL), 323 to 343 (LITKTVAYTHCCINPVIYAFV), and 351 to 371 (LYHFFHTYVAIYLCKYIPFLS). A disulfide bridge links C145 with C222.

Belongs to the G-protein coupled receptor 1 family.

It localises to the host membrane. The protein is G-protein coupled receptor E1 (E1) of Equine herpesvirus 2 (strain 86/87) (EHV-2).